The following is a 438-amino-acid chain: Xanthine permease (438 aa).

13 consecutive transmembrane segments (helical) span residues 11–31, 41–61, 65–85, 100–120, 121–141, 154–174, 180–200, 220–240, 272–292, 308–328, 331–351, 367–387, and 396–416; these read LGIQ…LIVG, LTYL…LQVW, FFGI…SPMI, IIAS…LVSF, FPPV…MPVA, FGDL…VLLY, FIKS…AYFM, FYFG…IVAI, AEGL…TAFS, VIVV…IAAF, IIPS…VIAY, LLIV…PDIF, and LLTT…NIVY.

Belongs to the nucleobase:cation symporter-2 (NCS2) (TC 2.A.40) family.

It is found in the cell membrane. Functionally, transport of xanthine in the cell. This is Xanthine permease (pbuX) from Bacillus subtilis (strain 168).